We begin with the raw amino-acid sequence, 353 residues long: Uroporphyrinogen decarboxylase (353 aa).

Substrate is bound by residues 25-29 (RQAGR), D74, Y151, S206, and H325.

Belongs to the uroporphyrinogen decarboxylase family. Homodimer.

It is found in the cytoplasm. The enzyme catalyses uroporphyrinogen III + 4 H(+) = coproporphyrinogen III + 4 CO2. It participates in porphyrin-containing compound metabolism; protoporphyrin-IX biosynthesis; coproporphyrinogen-III from 5-aminolevulinate: step 4/4. Catalyzes the decarboxylation of four acetate groups of uroporphyrinogen-III to yield coproporphyrinogen-III. The protein is Uroporphyrinogen decarboxylase of Chloroherpeton thalassium (strain ATCC 35110 / GB-78).